A 377-amino-acid polypeptide reads, in one-letter code: Protein-tyrosine sulfotransferase 2 (377 aa).

Residues 1-8 (MRLSVRRV) are Cytoplasmic-facing. The chain crosses the membrane as a helical; Signal-anchor for type II membrane protein span at residues 9-25 (LLAAGCALVLVLAVQLG). The Lumenal portion of the chain corresponds to 26–377 (QQVLECRAVL…NSTSSHLGSS (352 aa)). A 3'-phosphoadenylyl sulfate-binding site is contributed by 78–82 (RSGTT). The cysteines at positions 96 and 156 are disulfide-linked. Residue Glu99 is the Proton donor/acceptor of the active site. The tract at residues 101 to 105 (RIIPR) is interaction with peptide substrate. Positions 183, 191, and 195 each coordinate 3'-phosphoadenylyl sulfate. The cysteines at positions 225 and 233 are disulfide-linked. 3'-phosphoadenylyl sulfate contacts are provided by residues Tyr238, 285-294 (STDQVIKPVN), and Lys300. 2 N-linked (GlcNAc...) asparagine glycosylation sites follow: Asn343 and Asn368.

This sequence belongs to the protein sulfotransferase family. In terms of assembly, homodimer. Can also form heterodimers with TPST1. Post-translationally, N-glycosylated. In terms of tissue distribution, widely expressed.

Its subcellular location is the golgi apparatus membrane. It catalyses the reaction L-tyrosyl-[protein] + 3'-phosphoadenylyl sulfate = O-sulfo-L-tyrosine-[protein] + adenosine 3',5'-bisphosphate + H(+). Catalyzes the O-sulfation of tyrosine residues within acidic motifs of polypeptides, using 3'-phosphoadenylyl sulfate (PAPS) as cosubstrate. This is Protein-tyrosine sulfotransferase 2 (TPST2) from Homo sapiens (Human).